The chain runs to 86 residues: U15-lycotoxin-Ls1a (86 aa).

An N-terminal signal peptide occupies residues 1–20 (MNSKIFAVLFLLAFLSCVLS). The 46-residue stretch at 21–66 (DQYCPKSSITACKKMNIRNDCCKDDDCTGGSWCCATPCGNFCKYPT) folds into the WAP domain. Intrachain disulfides connect cysteine 24–cysteine 54, cysteine 32–cysteine 58, cysteine 41–cysteine 53, cysteine 42–cysteine 80, and cysteine 47–cysteine 62.

Belongs to the venom protein 11 family. 01 (wap-1) subfamily. In terms of processing, contains 5 disulfide bonds. In terms of tissue distribution, expressed by the venom gland.

It localises to the secreted. In terms of biological role, has antibacterial activity. The polypeptide is U15-lycotoxin-Ls1a (Lycosa singoriensis (Wolf spider)).